The primary structure comprises 199 residues: 3-isopropylmalate dehydratase small subunit (199 aa).

The protein belongs to the LeuD family. LeuD type 1 subfamily. As to quaternary structure, heterodimer of LeuC and LeuD.

It carries out the reaction (2R,3S)-3-isopropylmalate = (2S)-2-isopropylmalate. It participates in amino-acid biosynthesis; L-leucine biosynthesis; L-leucine from 3-methyl-2-oxobutanoate: step 2/4. In terms of biological role, catalyzes the isomerization between 2-isopropylmalate and 3-isopropylmalate, via the formation of 2-isopropylmaleate. This Bacillus licheniformis (strain ATCC 14580 / DSM 13 / JCM 2505 / CCUG 7422 / NBRC 12200 / NCIMB 9375 / NCTC 10341 / NRRL NRS-1264 / Gibson 46) protein is 3-isopropylmalate dehydratase small subunit.